A 110-amino-acid chain; its full sequence is UPF0060 membrane protein RPA3838 (110 aa).

Transmembrane regions (helical) follow at residues 4–24 (LLTF…FWAW), 31–51 (PLWL…LTLA), 59–79 (AYAA…WAIE), and 85–105 (QWDV…LFGP).

It belongs to the UPF0060 family.

It localises to the cell inner membrane. The sequence is that of UPF0060 membrane protein RPA3838 from Rhodopseudomonas palustris (strain ATCC BAA-98 / CGA009).